We begin with the raw amino-acid sequence, 923 residues long: Transportin-3 (923 aa).

N-acetylmethionine is present on Met-1. At Ser-74 the chain carries Phosphoserine. A phosphothreonine mark is found at His-242 and Thr-896.

As to quaternary structure, interacts with (GTP-bound) Ran. Interacts with (phosphorylated) SFRS1 and SFRS2; leading to their nuclear import. Interacts with NUP62. Interacts with RBM4. Interacts with CPSF6, promoting its nuclear import.

It localises to the nucleus envelope. The protein localises to the cytoplasm. Its function is as follows. Importin, which transports target proteins into the nucleus. Specifically mediates the nuclear import of splicing factor serine/arginine (SR) proteins, such as RBM4, SFRS1 and SFRS2, by recognizing phosphorylated SR domains. Also mediates the nuclear import of serine/arginine (SR) protein CPSF6, independently of CPSF6 phosphorylation. The nuclear import process is regulated by the small GTPase Ran that partitions between cytoplasm and nucleus in the predominantly GDP- and GTP-bound form, respectively. Importin associates with target cargo proteins in the cytoplasm, and the competitive binding of GTP-bound Ran induces the release of cargos in the nucleus. This is Transportin-3 from Mus musculus (Mouse).